The sequence spans 796 residues: Putative aconitate hydratase, mitochondrial (796 aa).

A mitochondrion-targeting transit peptide spans 1 to 28; sequence MLRQIVSQRSAARRQLIDQLAPCLRRGL. Residues glutamine 108 and 201–203 contribute to the substrate site; that span reads DSH. Cysteine 399, cysteine 462, and cysteine 465 together coordinate [4Fe-4S] cluster. Residues arginine 489 and arginine 494 each coordinate substrate. The interval 540 to 569 is disordered; that stretch reads EPPTGQDLPSKGFEAGNPAFQPSAPVPDSS. 685 to 686 lines the substrate pocket; that stretch reads AR.

The protein belongs to the aconitase/IPM isomerase family.

It localises to the mitochondrion. Its function is as follows. Has no detectable activity towards cis-acontiate or cis-homoaconitate. In Emericella nidulans (strain FGSC A4 / ATCC 38163 / CBS 112.46 / NRRL 194 / M139) (Aspergillus nidulans), this protein is Putative aconitate hydratase, mitochondrial (acoB).